The following is a 134-amino-acid chain: ATP synthase epsilon chain, chloroplastic (134 aa).

Belongs to the ATPase epsilon chain family. F-type ATPases have 2 components, CF(1) - the catalytic core - and CF(0) - the membrane proton channel. CF(1) has five subunits: alpha(3), beta(3), gamma(1), delta(1), epsilon(1). CF(0) has three main subunits: a, b and c.

It localises to the plastid. It is found in the chloroplast thylakoid membrane. Produces ATP from ADP in the presence of a proton gradient across the membrane. In Amborella trichopoda, this protein is ATP synthase epsilon chain, chloroplastic.